The primary structure comprises 591 residues: MMRSHYCGQLNESLEGQEITLCGWVHRRRDHGGVIFLDIRDREGMAQVVFDPDRADSFAAADRVRSEYVVKVVGKVRARPAGAVNANMASGAIEVLGYELEVLNESETPPFPLNEYSDVGEETRLRYRFIDLRRPEMAEKLRLRSRITTSIRRYLDDNGFLDVETPILTRATPEGARDYLVPSRTHPGSFFALPQSPQLFKQLLMVAGFDRYYQIAKCFRDEDLRADRQPEFTQIDIETSFLNEEDIIGLTEKMVRQLFKEVLDLEFGDFPHMTFEEAMRRYGSDKPDLRNPLELVDVADQLTGVEFKVFSGPANDPKGRVAALRVPGAASMARSQIDDYTKFVSIYGAKGLAYIKVNERAKGPEGLQSPIVKFIPEDNLNVILDRVGAVDGDIVFFGADKFKIVSEALGALRIKIGNDLKLHTCEWAPMWVVDFPMFEENDDGSFTALHHPFTAPKCTPEELEANPATALSRAYDMVLNGTELGGGSIRIHRKEMQQAVFRLLGIAEDEQQEKFGFLLDALKYGAPPHGGLAFGLDRLVMLMTGAQSIREVIAFPKTQSAADVMTQAPGVVDAKALRELHIRLREQPKAE.

E174 is a binding site for L-aspartate. Residues 198–201 (QLFK) form an aspartate region. R220 contacts L-aspartate. Residues 220 to 222 (RDE) and Q229 contribute to the ATP site. H450 is an L-aspartate binding site. Residue E483 participates in ATP binding. R490 is an L-aspartate binding site. 535 to 538 (GLDR) lines the ATP pocket.

This sequence belongs to the class-II aminoacyl-tRNA synthetase family. Type 1 subfamily. In terms of assembly, homodimer.

The protein localises to the cytoplasm. It catalyses the reaction tRNA(Asx) + L-aspartate + ATP = L-aspartyl-tRNA(Asx) + AMP + diphosphate. In terms of biological role, aspartyl-tRNA synthetase with relaxed tRNA specificity since it is able to aspartylate not only its cognate tRNA(Asp) but also tRNA(Asn). Reaction proceeds in two steps: L-aspartate is first activated by ATP to form Asp-AMP and then transferred to the acceptor end of tRNA(Asp/Asn). This chain is Aspartate--tRNA(Asp/Asn) ligase, found in Pseudomonas syringae pv. syringae (strain B728a).